The following is a 478-amino-acid chain: Protein nucleotidyltransferase YdiU (478 aa).

Residues glycine 74, glycine 76, arginine 77, lysine 97, aspartate 109, glycine 110, arginine 160, and arginine 167 each contribute to the ATP site. Catalysis depends on aspartate 236, which acts as the Proton acceptor. Asparagine 237 and aspartate 246 together coordinate Mg(2+). Aspartate 246 provides a ligand contact to ATP.

This sequence belongs to the SELO family. Mg(2+) serves as cofactor. Requires Mn(2+) as cofactor.

It carries out the reaction L-seryl-[protein] + ATP = 3-O-(5'-adenylyl)-L-seryl-[protein] + diphosphate. The enzyme catalyses L-threonyl-[protein] + ATP = 3-O-(5'-adenylyl)-L-threonyl-[protein] + diphosphate. It catalyses the reaction L-tyrosyl-[protein] + ATP = O-(5'-adenylyl)-L-tyrosyl-[protein] + diphosphate. The catalysed reaction is L-histidyl-[protein] + UTP = N(tele)-(5'-uridylyl)-L-histidyl-[protein] + diphosphate. It carries out the reaction L-seryl-[protein] + UTP = O-(5'-uridylyl)-L-seryl-[protein] + diphosphate. The enzyme catalyses L-tyrosyl-[protein] + UTP = O-(5'-uridylyl)-L-tyrosyl-[protein] + diphosphate. Its function is as follows. Nucleotidyltransferase involved in the post-translational modification of proteins. It can catalyze the addition of adenosine monophosphate (AMP) or uridine monophosphate (UMP) to a protein, resulting in modifications known as AMPylation and UMPylation. This is Protein nucleotidyltransferase YdiU from Chromobacterium violaceum (strain ATCC 12472 / DSM 30191 / JCM 1249 / CCUG 213 / NBRC 12614 / NCIMB 9131 / NCTC 9757 / MK).